Reading from the N-terminus, the 229-residue chain is Large ribosomal subunit protein uL1 (229 aa).

It belongs to the universal ribosomal protein uL1 family. Part of the 50S ribosomal subunit.

Binds directly to 23S rRNA. The L1 stalk is quite mobile in the ribosome, and is involved in E site tRNA release. Its function is as follows. Protein L1 is also a translational repressor protein, it controls the translation of the L11 operon by binding to its mRNA. The chain is Large ribosomal subunit protein uL1 from Caulobacter vibrioides (strain ATCC 19089 / CIP 103742 / CB 15) (Caulobacter crescentus).